Consider the following 164-residue polypeptide: HTH-type transcriptional regulator IscR (164 aa).

Residues 2-131 (RLTSKGRYAV…NNITLDELVN (130 aa)) form the HTH rrf2-type domain. A DNA-binding region (H-T-H motif) is located at residues 28–51 (LADISERQGISLSYLEQLFSRLRK). Residues cysteine 92, cysteine 98, and cysteine 104 each coordinate [2Fe-2S] cluster.

[2Fe-2S] cluster serves as cofactor.

In terms of biological role, regulates the transcription of several operons and genes involved in the biogenesis of Fe-S clusters and Fe-S-containing proteins. This Pectobacterium atrosepticum (strain SCRI 1043 / ATCC BAA-672) (Erwinia carotovora subsp. atroseptica) protein is HTH-type transcriptional regulator IscR.